The following is a 175-amino-acid chain: MRLSVAAAISHGRVFRRMGLGPESRIHLLRNLLTGLVRHERIEAPWARVDEMRGYAEKLIDYGKLGDTNERAMRMADFWLTEKDLIPKLFQVLAPRYKDQTGGYTRMLQIPNRSLDRAKMAVIEYKGNCLPPLPLPRRDSHLTLLNQLLQGLRQDLRQSQEASNHSSHTAQTPGI.

Residues 1–8 (MRLSVAAA) constitute a mitochondrion transit peptide. The disordered stretch occupies residues 155 to 175 (DLRQSQEASNHSSHTAQTPGI). Residues 161 to 175 (EASNHSSHTAQTPGI) are compositionally biased toward polar residues.

This sequence belongs to the bacterial ribosomal protein bL17 family. Component of the mitochondrial large ribosomal subunit (mt-LSU). Mature mammalian 55S mitochondrial ribosomes consist of a small (28S) and a large (39S) subunit. The 28S small subunit contains a 12S ribosomal RNA (12S mt-rRNA) and 30 different proteins. The 39S large subunit contains a 16S rRNA (16S mt-rRNA), a copy of mitochondrial valine transfer RNA (mt-tRNA(Val)), which plays an integral structural role, and 52 different proteins. In terms of tissue distribution, detected in adrenal gland, mammary gland and adipose tissue.

Its subcellular location is the mitochondrion. In Homo sapiens (Human), this protein is Large ribosomal subunit protein bL17m (MRPL17).